A 148-amino-acid chain; its full sequence is MFDVTLLILLGLAALGFISHNTTVAVSILVLIIVRVTPLSTFFPWIEKQGLSIGIIILTIGVMAPIASGTLPPSTLIHSFLNWKSLVAIAVGVIVSWLGGRGVTLMGSQSQLVAGLLVGTVLGVALFRGVPVGPLIAAGLVSLIVGKQ.

4 helical membrane-spanning segments follow: residues 14 to 34 (ALGF…LIIV), 51 to 71 (LSIG…SGTL), 86 to 106 (LVAI…VTLM), and 121 to 141 (VLGV…AGLV).

It belongs to the UPF0756 family.

The protein localises to the cell membrane. In Escherichia coli (strain B / REL606), this protein is UPF0756 membrane protein YeaL.